A 428-amino-acid polypeptide reads, in one-letter code: uncharacterized protein (428 aa).

Disordered regions lie at residues 1–25 (MRDN…PTRT), 157–219 (DTAK…TEQV), and 247–271 (DFGT…PWRP). The segment covering 12 to 22 (GSESQQTTYDP) has biased composition (polar residues). Residues 157 to 171 (DTAKSNEKLQGDESK) show a composition bias toward basic and acidic residues. A compositionally biased stretch (low complexity) spans 172–186 (SSNGSSSTSTTTQRG). Residues 206-217 (GSQGNSGEQGTE) are compositionally biased toward polar residues.

This sequence belongs to the adhesin P1 family.

This is an uncharacterized protein from Mycoplasma pneumoniae (strain ATCC 29342 / M129 / Subtype 1) (Mycoplasmoides pneumoniae).